The sequence spans 459 residues: Septin-4 (459 aa).

Residues serine 10, serine 49, serine 98, and serine 99 each carry the phosphoserine modification. Disordered regions lie at residues 18-52 and 70-98; these read FVKD…SPDL and SQQY…PYDS. Residues 122–395 enclose the Septin-type G domain; the sequence is KGFDFTLMVA…ENYRAQCIQS (274 aa). The segment at 132–139 is G1 motif; sequence GESGLGKS. Residues 132 to 139 and threonine 166 contribute to the GTP site; that span reads GESGLGKS. Positions 189-192 are G3 motif; that stretch reads DTPG. The G4 motif stretch occupies residues 270–273; sequence AKAD. A GTP-binding site is contributed by 271–279; sequence KADTLTPSE. Serine 306 is modified (phosphoserine). GTP contacts are provided by glycine 329 and arginine 344. The interval 410 to 430 is disordered; it reads TRESGTDFPIPAVPPGTDPET. Residue serine 413 is modified to Phosphoserine. Residue threonine 415 is modified to Phosphothreonine. Residues 434 to 459 are a coiled coil; the sequence is IREKDEELRRMQEMLHKIQRQMKETH.

Belongs to the TRAFAC class TrmE-Era-EngA-EngB-Septin-like GTPase superfamily. Septin GTPase family. Septins polymerize into heterooligomeric protein complexes that form filaments, and can associate with cellular membranes, actin filaments and microtubules. GTPase activity is required for filament formation. Interacts with SEPTIN8. Component of a septin core octameric complex consisting of SEPTIN12, SEPTIN7, SEPTIN6 and SEPTIN2 or SEPTIN4 in the order 12-7-6-2-2-6-7-12 or 12-7-6-4-4-6-7-12. Interacts with SEPTIN14 (via C-terminus). Interacts with DYRK1A. Interacts with SLC6A3/DAT and SNCA/alpha-synuclein. Interacts with STX1A; in the striatum. Interacts with XIAP (via BIR3 domain) following the induction of apoptosis. Interacts with AREL1 (via HECT domain); in the cytoplasm following induction of apoptosis. Post-translationally, phosphorylated by DYRK1A.

It localises to the cytoplasm. The protein resides in the cell projection. It is found in the cilium. Its subcellular location is the flagellum. The protein localises to the cytoplasmic vesicle. It localises to the secretory vesicle. The protein resides in the axon. It is found in the dendrite. Its subcellular location is the perikaryon. Its function is as follows. Filament-forming cytoskeletal GTPase. Pro-apoptotic protein involved in LGR5-positive intestinal stem cell and Paneth cell expansion in the intestines, via its interaction with XIAP. May also play a role in the regulation of cell fate in the intestine. Positive regulator of apoptosis involved in hematopoietic stem cell homeostasis; via its interaction with XIAP. Negative regulator of repair and hair follicle regeneration in response to injury, due to inhibition of hair follicle stem cell proliferation, potentially via its interaction with XIAP. Plays an important role in male fertility and sperm motility. During spermiogenesis, essential for the establishment of the annulus (a fibrous ring structure connecting the midpiece and the principal piece of the sperm flagellum) which is a requisite for the structural and mechanical integrity of the sperm. Involved in the migration of cortical neurons and the formation of neuron leading processes during embryonic development. Required for dopaminergic metabolism in presynaptic autoreceptors; potentially via activity as a presynaptic scaffold protein. The sequence is that of Septin-4 from Rattus norvegicus (Rat).